A 302-amino-acid polypeptide reads, in one-letter code: Sulfate adenylyltransferase subunit 2 (302 aa).

The protein belongs to the PAPS reductase family. CysD subfamily. In terms of assembly, heterodimer composed of CysD, the smaller subunit, and CysN.

It carries out the reaction sulfate + ATP + H(+) = adenosine 5'-phosphosulfate + diphosphate. It functions in the pathway sulfur metabolism; hydrogen sulfide biosynthesis; sulfite from sulfate: step 1/3. Functionally, with CysN forms the ATP sulfurylase (ATPS) that catalyzes the adenylation of sulfate producing adenosine 5'-phosphosulfate (APS) and diphosphate, the first enzymatic step in sulfur assimilation pathway. APS synthesis involves the formation of a high-energy phosphoric-sulfuric acid anhydride bond driven by GTP hydrolysis by CysN coupled to ATP hydrolysis by CysD. The polypeptide is Sulfate adenylyltransferase subunit 2 (Erwinia tasmaniensis (strain DSM 17950 / CFBP 7177 / CIP 109463 / NCPPB 4357 / Et1/99)).